The chain runs to 218 residues: NAD(P)H-quinone oxidoreductase subunit I (218 aa).

4Fe-4S ferredoxin-type domains lie at 55 to 84 (GRIH…VDWV) and 95 to 124 (RNYS…MTEE). [4Fe-4S] cluster is bound by residues Cys-64, Cys-67, Cys-70, Cys-74, Cys-104, Cys-107, Cys-110, and Cys-114. A disordered region spans residues 192-218 (LSLQQDSLQGDEGESLQDAPDQDQPKG).

This sequence belongs to the complex I 23 kDa subunit family. As to quaternary structure, NDH-1 is composed of at least 11 different subunits. [4Fe-4S] cluster serves as cofactor.

Its subcellular location is the cellular thylakoid membrane. It carries out the reaction a plastoquinone + NADH + (n+1) H(+)(in) = a plastoquinol + NAD(+) + n H(+)(out). The enzyme catalyses a plastoquinone + NADPH + (n+1) H(+)(in) = a plastoquinol + NADP(+) + n H(+)(out). Its function is as follows. NDH-1 shuttles electrons from an unknown electron donor, via FMN and iron-sulfur (Fe-S) centers, to quinones in the respiratory and/or the photosynthetic chain. The immediate electron acceptor for the enzyme in this species is believed to be plastoquinone. Couples the redox reaction to proton translocation, and thus conserves the redox energy in a proton gradient. The polypeptide is NAD(P)H-quinone oxidoreductase subunit I (Prochlorococcus marinus (strain MIT 9303)).